The following is a 408-amino-acid chain: Argininosuccinate synthase (408 aa).

ATP-binding positions include 14–22 (AYSGGLDTS) and A41. Residues Y92 and S97 each coordinate L-citrulline. G122 serves as a coordination point for ATP. L-aspartate-binding residues include T124, N128, and D129. N128 is a binding site for L-citrulline. Residues R132, S181, S190, E266, and Y278 each coordinate L-citrulline.

The protein belongs to the argininosuccinate synthase family. Type 1 subfamily. In terms of assembly, homotetramer.

It is found in the cytoplasm. The catalysed reaction is L-citrulline + L-aspartate + ATP = 2-(N(omega)-L-arginino)succinate + AMP + diphosphate + H(+). The protein operates within amino-acid biosynthesis; L-arginine biosynthesis; L-arginine from L-ornithine and carbamoyl phosphate: step 2/3. The chain is Argininosuccinate synthase from Pelobacter propionicus (strain DSM 2379 / NBRC 103807 / OttBd1).